The following is a 558-amino-acid chain: MRKGGWWLALGMFSASALATCPDWPPARGRQEISRLHQQIVAWKEDYWRQGASEVSDEVYDQLTLRLAQWRQCFPGTTPEDDDLPPPTGDARHPVAHTGVRKLADEVSVAHWMKNKTDLWIQPKVDGVAVTLVYRQGSLVQAISRGDGLRGEAWTARARQIPALAKVTTGELANSVLQGELFLRRDGHVQQQAGGMNARAKVAGLMMRADAAAALSQLDVFIWAWPDGPSDMRRRQQLLTQAGFKYSGQYTHPVTRVEQVAQWRQRWYRSPLPFVSDGVIVREGREPPGRAWSPGKGEWLAAWKYPPASQVMEVRAIHFSTGRSGRLNVVAQLEPQRLDDKRVQRVNVGSVARWQALDIGVGDQLQISLAGQGIPRIDAVVWRTAERHKPTPPAAKFNALTCYFATPECSEQFLSRLIWLSSKSALDVDGVGEHLWRAIQQQNPMTHIFSWLALTVEQLQAVPGISAARGQHLWHQFDLVRKRPFIRWVLAMGLPVPQGALAQLESENWHLLAAKSEAQWRALPGVGEIRARQLVAFLHHPDVVALAQWLSGQRIPGF.

The N6-AMP-lysine intermediate role is filled by K124.

The protein belongs to the NAD-dependent DNA ligase family. LigB subfamily.

The enzyme catalyses NAD(+) + (deoxyribonucleotide)n-3'-hydroxyl + 5'-phospho-(deoxyribonucleotide)m = (deoxyribonucleotide)n+m + AMP + beta-nicotinamide D-nucleotide.. Its function is as follows. Catalyzes the formation of phosphodiester linkages between 5'-phosphoryl and 3'-hydroxyl groups in double-stranded DNA using NAD as a coenzyme and as the energy source for the reaction. The protein is DNA ligase B of Klebsiella pneumoniae (strain 342).